We begin with the raw amino-acid sequence, 473 residues long: Response regulator protein FleR (473 aa).

The 115-residue stretch at 4–118 (KVLLVEDDRA…ALLDLVARHA (115 aa)) folds into the Response regulatory domain. The residue at position 53 (Asp53) is a 4-aspartylphosphate. The 230-residue stretch at 130-359 (PVALEPASRQ…LDNAIQRALI (230 aa)) folds into the Sigma-54 factor interaction domain. ATP-binding positions include 158–165 (GESGTGKE) and 221–230 (ADGGTILLDE).

In terms of biological role, member of the two-component regulatory system FleS/FleR that regulates the expression of multiple genes involved in flagellar synthesis, adhesion, swarming, motility and antibiotic resistance. May function as a transcriptional activator by direct binding to a cis-acting sequence upstream of the target genes. In Pseudomonas aeruginosa (strain ATCC 15692 / DSM 22644 / CIP 104116 / JCM 14847 / LMG 12228 / 1C / PRS 101 / PAO1), this protein is Response regulator protein FleR.